Reading from the N-terminus, the 200-residue chain is Eukaryotic translation initiation factor isoform 4E (200 aa).

MRNA is bound by residues Q44–G49, K76, and W94–E95. C99 and C138 are joined by a disulfide. MRNA contacts are provided by residues R145–K150 and K189–R192.

The protein belongs to the eukaryotic initiation factor 4E family. As to quaternary structure, EIF4F is a multi-subunit complex, the composition of which varies with external and internal environmental conditions. It is composed of at least EIF4A, EIF4E and EIF4G. EIF4E is also known to interact with other partners. In higher plants two isoforms of EIF4F have been identified, named isoform EIF4F and isoform EIF(iso)4F. Isoform EIF4F has subunits p220 and p26, whereas isoform EIF(iso)4F has subunits p82 and p28. In terms of assembly, (Microbial infection) Interacts with viral genome-linked protein (VPg); this interaction is possible in susceptible hosts but impaired in resistant plants. According to the redox status, the Cys-99-Cys-138 disulfide bridge may have a role in regulating protein function by affecting its ability to bind capped mRNA. In terms of tissue distribution, mostly expressed in roots and leaves, and, to a lower extent, in stems, flowers and immature green fruits.

It is found in the cytoplasm. The protein localises to the nucleus. In terms of biological role, component of the protein complex eIF4F, which is involved in the recognition of the mRNA cap, ATP-dependent unwinding of 5'-terminal secondary structure and recruitment of mRNA to the ribosome. Recognizes and binds the 7-methylguanosine-containing mRNA cap during an early step in the initiation of protein synthesis and facilitates ribosome binding by inducing the unwinding of the mRNAs secondary structures. Key component of recessive resistance to potyviruses. Its function is as follows. (Microbial infection) Susceptibility host factor required for viral infection by recruiting viral RNAs to the host ribosomal complex via an interaction with viral genome-linked protein (VPg). The protein is Eukaryotic translation initiation factor isoform 4E of Solanum lycopersicum (Tomato).